The primary structure comprises 392 residues: GTPase Obg (392 aa).

The Obg domain occupies methionine 1–leucine 159. The interval asparagine 127–aspartate 148 is disordered. Residues arginine 129 to methionine 143 show a composition bias toward polar residues. The OBG-type G domain maps to alanine 160 to isoleucine 333. Residues glycine 166–serine 173, phenylalanine 191–valine 195, aspartate 213–glycine 216, asparagine 283–aspartate 286, and serine 314–alanine 316 each bind GTP. Residues serine 173 and threonine 193 each coordinate Mg(2+). Residues glutamate 362 to valine 386 show a composition bias toward acidic residues. Positions glutamate 362–arginine 392 are disordered.

The protein belongs to the TRAFAC class OBG-HflX-like GTPase superfamily. OBG GTPase family. Monomer. It depends on Mg(2+) as a cofactor.

Its subcellular location is the cytoplasm. In terms of biological role, an essential GTPase which binds GTP, GDP and possibly (p)ppGpp with moderate affinity, with high nucleotide exchange rates and a fairly low GTP hydrolysis rate. Plays a role in control of the cell cycle, stress response, ribosome biogenesis and in those bacteria that undergo differentiation, in morphogenesis control. This chain is GTPase Obg, found in Klebsiella pneumoniae subsp. pneumoniae (strain ATCC 700721 / MGH 78578).